The primary structure comprises 626 residues: Hormonally up-regulated neu tumor-associated kinase homolog B (626 aa).

Residues 1 to 2 (KV) and lysine 17 each bind ATP. Residues 1 to 246 (KVREGLHVGT…IQQALANRWL (246 aa)) form the Protein kinase domain. The active-site Proton acceptor is aspartate 112. Over residues 336 to 357 (KYKMNKNSYEERRSKDLEKRGE) the composition is skewed to basic and acidic residues. 3 disordered regions span residues 336–407 (KYKM…ESFG), 477–574 (VNRE…RSRG), and 590–615 (QVVS…PGYA). The segment covering 374-390 (SHRQSTCLTPQGHSSSK) has biased composition (polar residues). The segment covering 392 to 405 (PIKERRSSKSERES) has biased composition (basic and acidic residues). Polar residues predominate over residues 518 to 532 (DNTSPLKGHSNQASF). Low complexity predominate over residues 539–555 (SPSSPESMSPTSPHSPS). Residues 556–566 (CNNNISGNLGS) show a composition bias toward polar residues.

The protein belongs to the protein kinase superfamily. CAMK Ser/Thr protein kinase family. SNF1 subfamily. As to expression, in the egg, expressed predominantly in the animal hemisphere. This pattern of expression persists throughout the cleavage and blastula stages. At the gastrula stage, expression is restricted to the ectoderm. In later-stage embryos, expressed over the entire embryonic surface including the open neural plate at stage 15 and the neural tube at stage 22. In tadpoles, strongly expressed in the neural tube, motor neurons, brain regions and sensory organs (otic vesicle and eye). Also expressed in the perisomitic mesoderm, brachial arches and embryonic epidermis of tadpoles.

The enzyme catalyses L-seryl-[protein] + ATP = O-phospho-L-seryl-[protein] + ADP + H(+). It catalyses the reaction L-threonyl-[protein] + ATP = O-phospho-L-threonyl-[protein] + ADP + H(+). The protein is Hormonally up-regulated neu tumor-associated kinase homolog B (hunk-b) of Xenopus laevis (African clawed frog).